The sequence spans 196 residues: Beta-crystallin A2 (196 aa).

Residues 1-11 (MTSEAMDTLGQ) are N-terminal arm. 2 consecutive Beta/gamma crystallin 'Greek key' domains span residues 12-51 (YKITVWEEESFQGKRCEFLMECPSIMERGFRKIRSIKVES) and 52-98 (GPWV…RPVK). Residues 99 to 104 (CANHND) are connecting peptide. Beta/gamma crystallin 'Greek key' domains follow at residues 105–146 (SKAI…KVNA) and 147–195 (GAWV…RRIQ).

This sequence belongs to the beta/gamma-crystallin family. Homo/heterodimer, or complexes of higher-order. The structure of beta-crystallin oligomers seems to be stabilized through interactions between the N-terminal arms.

Functionally, crystallins are the dominant structural components of the vertebrate eye lens. This Gallus gallus (Chicken) protein is Beta-crystallin A2 (CRYBA2).